A 235-amino-acid chain; its full sequence is Ribonuclease 3 (235 aa).

One can recognise an RNase III domain in the interval 6-131 (IDQLEKLTGH…LIAVIYLDGG (126 aa)). Residue Glu44 coordinates Mg(2+). The active site involves Asp48. Asp117 and Glu120 together coordinate Mg(2+). Glu120 is a catalytic residue. The 70-residue stretch at 156–225 (DAKTQLQEWA…AEKILRREGI (70 aa)) folds into the DRBM domain.

The protein belongs to the ribonuclease III family. In terms of assembly, homodimer. It depends on Mg(2+) as a cofactor.

Its subcellular location is the cytoplasm. The catalysed reaction is Endonucleolytic cleavage to 5'-phosphomonoester.. Digests double-stranded RNA. Involved in the processing of primary rRNA transcript to yield the immediate precursors to the large and small rRNAs (23S and 16S). Processes some mRNAs, and tRNAs when they are encoded in the rRNA operon. Processes pre-crRNA and tracrRNA of type II CRISPR loci if present in the organism. In Bartonella henselae (strain ATCC 49882 / DSM 28221 / CCUG 30454 / Houston 1) (Rochalimaea henselae), this protein is Ribonuclease 3.